The sequence spans 800 residues: Endonuclease MutS2 (800 aa).

Residue 336 to 343 (GPNTGGKT) participates in ATP binding. One can recognise a Smr domain in the interval 725-800 (LDLRGVRYEA…GDGATIVELK (76 aa)).

The protein belongs to the DNA mismatch repair MutS family. MutS2 subfamily. As to quaternary structure, homodimer. Binds to stalled ribosomes, contacting rRNA.

Its function is as follows. Endonuclease that is involved in the suppression of homologous recombination and thus may have a key role in the control of bacterial genetic diversity. Functionally, acts as a ribosome collision sensor, splitting the ribosome into its 2 subunits. Detects stalled/collided 70S ribosomes which it binds and splits by an ATP-hydrolysis driven conformational change. Acts upstream of the ribosome quality control system (RQC), a ribosome-associated complex that mediates the extraction of incompletely synthesized nascent chains from stalled ribosomes and their subsequent degradation. Probably generates substrates for RQC. The polypeptide is Endonuclease MutS2 (Leuconostoc mesenteroides subsp. mesenteroides (strain ATCC 8293 / DSM 20343 / BCRC 11652 / CCM 1803 / JCM 6124 / NCDO 523 / NBRC 100496 / NCIMB 8023 / NCTC 12954 / NRRL B-1118 / 37Y)).